A 560-amino-acid polypeptide reads, in one-letter code: Putative protease Do-like 11, mitochondrial (560 aa).

The N-terminal 65 residues, 1–65 (MFFRPCVHTV…RRSSTSAAER (65 aa)), are a transit peptide targeting the mitochondrion. The serine protease stretch occupies residues 117-302 (TEYSKSKPWK…ESRQYSCFGS (186 aa)). Residues His-150, Asp-184, and Ser-258 each act as charge relay system in the active site. A PDZ domain is found at 288–384 (ITSVQESRQY…YLVSMKKPGE (97 aa)).

This sequence belongs to the peptidase S1C family.

It is found in the mitochondrion membrane. Functionally, putative serine protease. This is Putative protease Do-like 11, mitochondrial (DEGP11) from Arabidopsis thaliana (Mouse-ear cress).